Reading from the N-terminus, the 378-residue chain is Alcohol dehydrogenase (378 aa).

Fe cation contacts are provided by D195, H199, H262, and H274.

Belongs to the iron-containing alcohol dehydrogenase family. Requires Fe(2+) as cofactor. The cofactor is Mn(2+).

The enzyme catalyses a primary alcohol + NAD(+) = an aldehyde + NADH + H(+). It carries out the reaction butan-1-ol + NAD(+) = butanal + NADH + H(+). It catalyses the reaction hexan-1-ol + NAD(+) = hexanal + NADH + H(+). The catalysed reaction is ethanol + NAD(+) = acetaldehyde + NADH + H(+). Functionally, thermostable type III alcohol dehydrogenase. For oxidation activity, the best substrates are 1-butanol and 1-hexanol, followed by ethanol. Shows lower activity with ethylene glycol, isopentanol, isopropanol and glycerol. Displays higher reduction activity in the presence of butanal, followed by acetaldehyde. Has lower activity with hexanal and acetone. This Thermococcus barophilus protein is Alcohol dehydrogenase.